We begin with the raw amino-acid sequence, 153 residues long: UPF0260 protein CKO_01185 (153 aa).

The protein belongs to the UPF0260 family.

In Citrobacter koseri (strain ATCC BAA-895 / CDC 4225-83 / SGSC4696), this protein is UPF0260 protein CKO_01185.